A 398-amino-acid chain; its full sequence is LIM/homeobox protein Lhx3 (398 aa).

2 LIM zinc-binding domains span residues 28 to 78 and 87 to 141; these read CAGC…CKDD and CAAC…CKAD. Positions 154–213 form a DNA-binding region, homeobox; the sequence is AKRPRTTITAKQLETLKNAYNNSPKPARHVREQLSTETGLDMRVVQVWFQNRRAKEKRLK. 2 disordered regions span residues 208 to 294 and 307 to 398; these read KEKR…FPLE and DIQA…HAQF. Residues 272–282 are compositionally biased toward low complexity; it reads SSLSESSPALS.

The protein resides in the nucleus. Transcription factor. The polypeptide is LIM/homeobox protein Lhx3 (lhx3) (Danio rerio (Zebrafish)).